The primary structure comprises 173 residues: Adenine phosphoribosyltransferase (173 aa).

The protein belongs to the purine/pyrimidine phosphoribosyltransferase family. As to quaternary structure, homodimer.

The protein resides in the cytoplasm. The catalysed reaction is AMP + diphosphate = 5-phospho-alpha-D-ribose 1-diphosphate + adenine. The protein operates within purine metabolism; AMP biosynthesis via salvage pathway; AMP from adenine: step 1/1. In terms of biological role, catalyzes a salvage reaction resulting in the formation of AMP, that is energically less costly than de novo synthesis. This is Adenine phosphoribosyltransferase from Thermoanaerobacter sp. (strain X514).